Consider the following 347-residue polypeptide: D-alanine--D-alanine ligase (347 aa).

The region spanning lysine 131–aspartate 333 is the ATP-grasp domain. Glutamate 161–glutamate 216 serves as a coordination point for ATP. Aspartate 287, glutamate 300, and asparagine 302 together coordinate Mg(2+).

This sequence belongs to the D-alanine--D-alanine ligase family. It depends on Mg(2+) as a cofactor. The cofactor is Mn(2+).

Its subcellular location is the cytoplasm. The enzyme catalyses 2 D-alanine + ATP = D-alanyl-D-alanine + ADP + phosphate + H(+). The protein operates within cell wall biogenesis; peptidoglycan biosynthesis. Functionally, cell wall formation. The chain is D-alanine--D-alanine ligase from Streptococcus pneumoniae (strain CGSP14).